The sequence spans 177 residues: Large ribosomal subunit protein uL6 (177 aa).

Belongs to the universal ribosomal protein uL6 family. In terms of assembly, part of the 50S ribosomal subunit.

Functionally, this protein binds to the 23S rRNA, and is important in its secondary structure. It is located near the subunit interface in the base of the L7/L12 stalk, and near the tRNA binding site of the peptidyltransferase center. This is Large ribosomal subunit protein uL6 from Teredinibacter turnerae (strain ATCC 39867 / T7901).